The chain runs to 239 residues: Purine nucleoside phosphorylase DeoD-type (239 aa).

His-5 is a binding site for a purine D-ribonucleoside. Residues Gly-21 and Arg-25 each contribute to the phosphate site. N6-acetyllysine is present on Lys-27. Phosphate is bound by residues Arg-44 and 88-91 (RVGS). Residues 180 to 182 (EME) and 204 to 205 (SD) contribute to the a purine D-ribonucleoside site. Asp-205 serves as the catalytic Proton donor.

It belongs to the PNP/UDP phosphorylase family. Homohexamer; trimer of homodimers.

It carries out the reaction a purine D-ribonucleoside + phosphate = a purine nucleobase + alpha-D-ribose 1-phosphate. It catalyses the reaction a purine 2'-deoxy-D-ribonucleoside + phosphate = a purine nucleobase + 2-deoxy-alpha-D-ribose 1-phosphate. In terms of biological role, catalyzes the reversible phosphorolytic breakdown of the N-glycosidic bond in the beta-(deoxy)ribonucleoside molecules, with the formation of the corresponding free purine bases and pentose-1-phosphate. In Escherichia coli O8 (strain IAI1), this protein is Purine nucleoside phosphorylase DeoD-type.